We begin with the raw amino-acid sequence, 845 residues long: BLOC-2 complex member HPS5 homolog (845 aa).

The disordered stretch occupies residues 239-268 (PTEEDLEDAKSMEGSDDNDNDQRSSPSGVK).

This sequence belongs to the HPS5 family.

Functionally, has a role in the biogenesis of eye pigment granules. Eye pigment granules are specialized forms of late endosomes or lysosomes. Biogenesis of pigment granules in the eye requires molecular components required for protein delivery to lysosomes. The sequence is that of BLOC-2 complex member HPS5 homolog from Aedes aegypti (Yellowfever mosquito).